The chain runs to 352 residues: Phosphoribosylformylglycinamidine cyclo-ligase (352 aa).

The protein belongs to the AIR synthase family.

It localises to the cytoplasm. The enzyme catalyses 2-formamido-N(1)-(5-O-phospho-beta-D-ribosyl)acetamidine + ATP = 5-amino-1-(5-phospho-beta-D-ribosyl)imidazole + ADP + phosphate + H(+). Its pathway is purine metabolism; IMP biosynthesis via de novo pathway; 5-amino-1-(5-phospho-D-ribosyl)imidazole from N(2)-formyl-N(1)-(5-phospho-D-ribosyl)glycinamide: step 2/2. In Pseudomonas putida (strain W619), this protein is Phosphoribosylformylglycinamidine cyclo-ligase.